The primary structure comprises 138 residues: Cysteine desulfuration protein SufE (138 aa).

The active-site Cysteine persulfide intermediate is the Cys-51.

This sequence belongs to the SufE family. In terms of assembly, homodimer. Interacts with SufS.

The protein localises to the cytoplasm. Its pathway is cofactor biosynthesis; iron-sulfur cluster biosynthesis. In terms of biological role, participates in cysteine desulfuration mediated by SufS. Cysteine desulfuration mobilizes sulfur from L-cysteine to yield L-alanine and constitutes an essential step in sulfur metabolism for biosynthesis of a variety of sulfur-containing biomolecules. Functions as a sulfur acceptor for SufS, by mediating the direct transfer of the sulfur atom from the S-sulfanylcysteine of SufS, an intermediate product of cysteine desulfuration process. The chain is Cysteine desulfuration protein SufE from Sodalis glossinidius (strain morsitans).